A 303-amino-acid chain; its full sequence is MNPEQIKTALGSGLLSFPVTHFDAEGRFAADSYREHVEWLAGYKAPVLFAAGGTGEFFSLKPDEIPTIVAAAKEVAGETAIVSGCGYGTEIAVDIARSVEKVGADGILLLPHYLIDAPQEGLYAHIKKVCQSVGIGVMVYNRDNSVLQADTLARLCDECPNLVGFKDGTGDIGLVRQITAKMGDRLMYLGGMPTAELFAEAYLGAGFTTYSSAVFNFVPGLANEFYAALRAGERATCERILVDFFYPFMAIRNRAKGYAVSAVKAGVRLQGFNAGPVRAPLKDLTNEEIGMLEALIGTHKRKA.

This sequence belongs to the DapA family.

The catalysed reaction is 5-dehydro-4-deoxy-D-glucarate + H(+) = 2,5-dioxopentanoate + CO2 + H2O. It participates in carbohydrate acid metabolism; D-glucarate degradation; 2,5-dioxopentanoate from D-glucarate: step 2/2. The protein is Probable 5-dehydro-4-deoxyglucarate dehydratase of Agrobacterium fabrum (strain C58 / ATCC 33970) (Agrobacterium tumefaciens (strain C58)).